Reading from the N-terminus, the 249-residue chain is 14-3-3-like protein D (249 aa).

Belongs to the 14-3-3 family.

This is 14-3-3-like protein D from Nicotiana tabacum (Common tobacco).